Reading from the N-terminus, the 287-residue chain is 4-hydroxybenzoate octaprenyltransferase (287 aa).

5 helical membrane passes run 35–55 (FAAG…GVVV), 96–116 (LFGV…PLVV), 211–231 (IIAA…MLAG), 235–255 (IYGL…KLIY), and 262–282 (CFTA…ALTL).

It belongs to the UbiA prenyltransferase family. It depends on Mg(2+) as a cofactor.

The protein localises to the cell inner membrane. The catalysed reaction is all-trans-octaprenyl diphosphate + 4-hydroxybenzoate = 4-hydroxy-3-(all-trans-octaprenyl)benzoate + diphosphate. It functions in the pathway cofactor biosynthesis; ubiquinone biosynthesis. In terms of biological role, catalyzes the prenylation of para-hydroxybenzoate (PHB) with an all-trans polyprenyl group. Mediates the second step in the final reaction sequence of ubiquinone-8 (UQ-8) biosynthesis, which is the condensation of the polyisoprenoid side chain with PHB, generating the first membrane-bound Q intermediate 3-octaprenyl-4-hydroxybenzoate. The chain is 4-hydroxybenzoate octaprenyltransferase from Shewanella halifaxensis (strain HAW-EB4).